Here is a 240-residue protein sequence, read N- to C-terminus: uncharacterized protein (240 aa).

This is an uncharacterized protein from Thermotoga maritima (strain ATCC 43589 / DSM 3109 / JCM 10099 / NBRC 100826 / MSB8).